A 486-amino-acid chain; its full sequence is NADH-quinone oxidoreductase subunit N (486 aa).

A run of 14 helical transmembrane segments spans residues 8–28 (FIAL…MLAV), 38–58 (ATLS…VLGV), 73–93 (ACFY…LAHA), 105–125 (LYLL…AQHL), 128–148 (LFIG…YAFF), 169–189 (FLLF…FAGL), 196–216 (HVLS…GLGF), 235–255 (PAPV…AVLL), 269–289 (LLNI…NLLA), 304–324 (IAHL…AVEA), 325–345 (VGVY…VITL), 373–393 (AVMT…GFIG), 405–427 (HLWW…YLRV), and 454–474 (IMLV…QPLL).

The protein belongs to the complex I subunit 2 family. As to quaternary structure, NDH-1 is composed of 13 different subunits. Subunits NuoA, H, J, K, L, M, N constitute the membrane sector of the complex.

Its subcellular location is the cell inner membrane. It carries out the reaction a quinone + NADH + 5 H(+)(in) = a quinol + NAD(+) + 4 H(+)(out). Its function is as follows. NDH-1 shuttles electrons from NADH, via FMN and iron-sulfur (Fe-S) centers, to quinones in the respiratory chain. The immediate electron acceptor for the enzyme in this species is believed to be ubiquinone. Couples the redox reaction to proton translocation (for every two electrons transferred, four hydrogen ions are translocated across the cytoplasmic membrane), and thus conserves the redox energy in a proton gradient. This Pseudomonas aeruginosa (strain ATCC 15692 / DSM 22644 / CIP 104116 / JCM 14847 / LMG 12228 / 1C / PRS 101 / PAO1) protein is NADH-quinone oxidoreductase subunit N.